Reading from the N-terminus, the 309-residue chain is Glutamyl-Q tRNA(Asp) synthetase (309 aa).

Residues 8-12 (RFSPS) and glutamate 44 each bind L-glutamate. Positions 11-21 (PSPTGPLHAGS) match the 'HIGH' region motif. Residues cysteine 100, cysteine 102, tyrosine 126, and cysteine 130 each coordinate Zn(2+). L-glutamate-binding residues include tyrosine 205 and arginine 223. The 'KMSKS' region signature appears at 261–265 (KLSKQ). Lysine 264 is a binding site for ATP.

This sequence belongs to the class-I aminoacyl-tRNA synthetase family. GluQ subfamily. Requires Zn(2+) as cofactor.

Its function is as follows. Catalyzes the tRNA-independent activation of glutamate in presence of ATP and the subsequent transfer of glutamate onto a tRNA(Asp). Glutamate is transferred on the 2-amino-5-(4,5-dihydroxy-2-cyclopenten-1-yl) moiety of the queuosine in the wobble position of the QUC anticodon. This chain is Glutamyl-Q tRNA(Asp) synthetase, found in Albidiferax ferrireducens (strain ATCC BAA-621 / DSM 15236 / T118) (Rhodoferax ferrireducens).